Reading from the N-terminus, the 233-residue chain is Esterase FUS5 (233 aa).

Catalysis depends on charge relay system residues S105, D159, and H187.

It belongs to the LovG family.

Esterase; part of the gene cluster that mediates the biosynthesis of the mycotoxin fusarin C. Within the cluster, FUS1, FUS2, FUS8 and FUS9 are sufficient for fusarin production. The other FUS cluster members are not essential for fusarin C biosynthesis. This is Esterase FUS5 from Gibberella moniliformis (strain M3125 / FGSC 7600) (Maize ear and stalk rot fungus).